Consider the following 290-residue polypeptide: GTPase Era (290 aa).

One can recognise an Era-type G domain in the interval 2–144 (KVLKVGVLGP…AIILEEFKPQ (143 aa)). Residues 10 to 17 (GPTNAGKS) are G1. 10-17 (GPTNAGKS) contacts GTP. A G2 region spans residues 36–40 (NTTLL). The segment at 58-61 (DVPG) is G3. A GTP-binding site is contributed by 58–62 (DVPGF). The interval 97-100 (NKIE) is G4. Residues 121–123 (INK) are G5. 122-125 (NKFH) contacts GTP. The 79-residue stretch at 201–279 (CKNEIPHIAR…FIDIFVKTEK (79 aa)) folds into the KH type-2 domain.

The protein belongs to the TRAFAC class TrmE-Era-EngA-EngB-Septin-like GTPase superfamily. Era GTPase family. Monomer.

It is found in the cytoplasm. The protein resides in the cell membrane. An essential GTPase that binds both GDP and GTP, with rapid nucleotide exchange. Plays a role in 16S rRNA processing and 30S ribosomal subunit biogenesis and possibly also in cell cycle regulation and energy metabolism. In Mycoplasma genitalium (strain ATCC 33530 / DSM 19775 / NCTC 10195 / G37) (Mycoplasmoides genitalium), this protein is GTPase Era.